The following is a 156-amino-acid chain: MPIDQEKLAKLQKMSAGNKVGGTRRKQAKKTGSGSAGNKDDTKLHNQLAKLHAVTIDNVAEANFFKDDGKVLHFNKVGVQVAPQHNTSVFYGMAQEKNLQELFPGIISQLGGEAIQALSQLAAQMEKAQANENAGEAKDEAIPELVEGQSFDAEVE.

Disordered stretches follow at residues 1–42 and 129–156; these read MPID…KDDT and QANE…AEVE. Residues 38–103 enclose the NAC-A/B domain; it reads NKDDTKLHNQ…AQEKNLQELF (66 aa).

Belongs to the NAC-beta family. As to quaternary structure, part of the nascent polypeptide-associated complex (NAC), consisting of EGD2 and EGD1. NAC associates with ribosomes via EGD1.

Its subcellular location is the cytoplasm. The protein localises to the nucleus. Its function is as follows. Component of the nascent polypeptide-associated complex (NAC), a dynamic component of the ribosomal exit tunnel, protecting the emerging polypeptides from interaction with other cytoplasmic proteins to ensure appropriate nascent protein targeting. The NAC complex also promotes mitochondrial protein import by enhancing productive ribosome interactions with the outer mitochondrial membrane and blocks the inappropriate interaction of ribosomes translating non-secretory nascent polypeptides with translocation sites in the membrane of the endoplasmic reticulum. EGD1 may act as a transcription factor that exert a negative effect on the expression of several genes that are transcribed by RNA polymerase II. This is Nascent polypeptide-associated complex subunit beta (EGD1) from Candida glabrata (strain ATCC 2001 / BCRC 20586 / JCM 3761 / NBRC 0622 / NRRL Y-65 / CBS 138) (Yeast).